The primary structure comprises 634 residues: Chaperone protein DnaK (634 aa).

Position 199 is a phosphothreonine; by autocatalysis (Thr-199). The span at 601-618 (AAAGQAQAESGAGAQGNA) shows a compositional bias: low complexity. Residues 601-634 (AAAGQAQAESGAGAQGNAKPDDVVDAEFEEVDKK) form a disordered region. The span at 623-634 (VVDAEFEEVDKK) shows a compositional bias: acidic residues.

The protein belongs to the heat shock protein 70 family.

In terms of biological role, acts as a chaperone. The chain is Chaperone protein DnaK from Acidithiobacillus ferrooxidans (strain ATCC 23270 / DSM 14882 / CIP 104768 / NCIMB 8455) (Ferrobacillus ferrooxidans (strain ATCC 23270)).